A 297-amino-acid polypeptide reads, in one-letter code: 3-mercaptopyruvate sulfurtransferase (297 aa).

Position 2 is an N-acetylalanine (alanine 2). In terms of domain architecture, Rhodanese 1 spans alanine 25 to serine 144. Serine 35 carries the phosphoserine modification. N6-acetyllysine; alternate is present on lysine 40. At lysine 40 the chain carries N6-succinyllysine; alternate. A hinge region spans residues glycine 145 to proline 160. N6-succinyllysine occurs at positions 146 and 164. The region spanning aspartate 174–valine 288 is the Rhodanese 2 domain. Residue arginine 188 coordinates substrate. The active-site Cysteine persulfide intermediate is cysteine 248.

In terms of assembly, monomer (active form). Homodimer; disulfide-linked (inactive form). In terms of processing, the N-terminus is blocked. Expressed in liver, heart, kidney and brain. Localizes to tubular epithelium in the kidney, pericentral hepatocytes in the liver, cardiac cells in the heart and neuroglial cells in the brain. Also expressed in vascular endothelium of the thoracic aorta. Weak expression in lung and thymus.

Its subcellular location is the cytoplasm. The protein localises to the mitochondrion. It is found in the synapse. It localises to the synaptosome. The enzyme catalyses 2-oxo-3-sulfanylpropanoate + [thioredoxin]-dithiol = [thioredoxin]-disulfide + hydrogen sulfide + pyruvate + H(+). By oxidative stress, and thioredoxin. Under oxidative stress conditions, the catalytic cysteine site is converted to a sulfenate which inhibits the MPST enzyme activity. Reduced thioredoxin cleaves an intersubunit disulfide bond to turn on the redox switch and reactivate the enzyme. Inhibited by different oxidants, hydrogen peroxide and tetrathionate. In terms of biological role, transfer of a sulfur ion to cyanide or to other thiol compounds. Also has weak rhodanese activity. Detoxifies cyanide and is required for thiosulfate biosynthesis. Acts as an antioxidant. In combination with cysteine aminotransferase (CAT), contributes to the catabolism of cysteine and is an important producer of hydrogen sulfide in the brain, retina and vascular endothelial cells. Hydrogen sulfide H(2)S is an important synaptic modulator, signaling molecule, smooth muscle contractor and neuroprotectant. Its production by the 3MST/CAT pathway is regulated by calcium ions. The polypeptide is 3-mercaptopyruvate sulfurtransferase (Mpst) (Rattus norvegicus (Rat)).